Reading from the N-terminus, the 274-residue chain is Diaminopimelate epimerase (274 aa).

Substrate-binding residues include asparagine 11, glutamine 44, and asparagine 64. Cysteine 73 functions as the Proton donor in the catalytic mechanism. Substrate contacts are provided by residues 74–75, asparagine 157, asparagine 190, and 208–209; these read GN and ER. Cysteine 217 (proton acceptor) is an active-site residue. 218-219 serves as a coordination point for substrate; it reads GS.

This sequence belongs to the diaminopimelate epimerase family. As to quaternary structure, homodimer.

It localises to the cytoplasm. It catalyses the reaction (2S,6S)-2,6-diaminopimelate = meso-2,6-diaminopimelate. It participates in amino-acid biosynthesis; L-lysine biosynthesis via DAP pathway; DL-2,6-diaminopimelate from LL-2,6-diaminopimelate: step 1/1. Catalyzes the stereoinversion of LL-2,6-diaminopimelate (L,L-DAP) to meso-diaminopimelate (meso-DAP), a precursor of L-lysine and an essential component of the bacterial peptidoglycan. This chain is Diaminopimelate epimerase, found in Mannheimia succiniciproducens (strain KCTC 0769BP / MBEL55E).